A 67-amino-acid polypeptide reads, in one-letter code: Large ribosomal subunit protein bL35 (67 aa).

Belongs to the bacterial ribosomal protein bL35 family.

This Methylorubrum extorquens (strain CM4 / NCIMB 13688) (Methylobacterium extorquens) protein is Large ribosomal subunit protein bL35.